Consider the following 95-residue polypeptide: Citrate lyase acyl carrier protein (95 aa).

O-(phosphoribosyl dephospho-coenzyme A)serine is present on Ser-14.

Belongs to the CitD family. In terms of assembly, oligomer with a subunit composition of (alpha,beta,gamma)6.

It localises to the cytoplasm. Functionally, covalent carrier of the coenzyme of citrate lyase. The polypeptide is Citrate lyase acyl carrier protein (Haemophilus influenzae (strain PittGG)).